We begin with the raw amino-acid sequence, 275 residues long: MSFVIATFYHFVELSNYYDMKDEIKAACNNVELKGTILLAEEGVNATISGERNAIDKIFDFLRSDYRLRDLTWKESAAEYQPFSKMKVKLKREIVNLGVSNLDISLRGKYVDPEHWDDFTSQPDVLVIDTRNEYEVKLGKFKNAINPHTQCFREFPQWTESFSESKDLKVAMYCTGGIRCEKSTAYMKSLGFSDVYHLKGGILSYLEKTYNKNGNWKGECFVFDDRIAVDNSLTPSNTIKCIFCSNQVSTDKLKSVPRGQVVCSDCKLQCYSYNK.

In terms of domain architecture, Rhodanese spans 121-214; sequence SQPDVLVIDT…YLEKTYNKNG (94 aa). Cys-174 acts as the Cysteine persulfide intermediate in catalysis.

It belongs to the TrhO family.

The enzyme catalyses uridine(34) in tRNA + AH2 + O2 = 5-hydroxyuridine(34) in tRNA + A + H2O. Functionally, catalyzes oxygen-dependent 5-hydroxyuridine (ho5U) modification at position 34 in tRNAs. The sequence is that of tRNA uridine(34) hydroxylase from Wolbachia pipientis wMel.